The following is a 319-amino-acid chain: Annexin A5 (319 aa).

Ala2 is modified (N-acetylalanine). Annexin repeat units lie at residues 13–84 (FDGR…ALMK), 85–156 (PSRL…VLLQ), 168–240 (AQVE…AVVK), and 244–315 (SIPA…LLCG). Lys27 participates in a covalent cross-link: Glycyl lysine isopeptide (Lys-Gly) (interchain with G-Cter in SUMO1); alternate. Lys27 is covalently cross-linked (Glycyl lysine isopeptide (Lys-Gly) (interchain with G-Cter in SUMO2); alternate). Ser35 bears the Phosphoserine mark. Lys68, Lys74, Lys77, Lys95, and Lys99 each carry N6-acetyllysine. An N6-succinyllysine modification is found at Lys288. Positions 312–318 (LLCGGED) match the [IL]-x-C-x-x-[DE] motif motif.

The protein belongs to the annexin family. Monomer. Binds ATRX, EIF5B and DNMT1. Post-translationally, S-nitrosylation is induced by interferon-gamma and oxidatively-modified low-densitity lipoprotein (LDL(ox)) possibly implicating the iNOS-S100A8/9 transnitrosylase complex.

Its function is as follows. This protein is an anticoagulant protein that acts as an indirect inhibitor of the thromboplastin-specific complex, which is involved in the blood coagulation cascade. This is Annexin A5 (Anxa5) from Rattus norvegicus (Rat).